The following is a 393-amino-acid chain: Staphopain B (393 aa).

The signal sequence occupies residues 1–36 (MNSSCKTRVFNIISIIMVSMLILSLGAFANNNKAKA). Residues 37–219 (DSHSKQLEIN…KVEENEAIQE (183 aa)) constitute a propeptide that is removed on maturation. Active-site residues include Cys-243, His-340, and Asn-360.

This sequence belongs to the peptidase C47 family. In terms of assembly, in the cytoplasm, prematurely activated/folded SspB forms a stable non-covalent complex with SspC. Proteolytically cleaved by staphylococcal serine protease (SspA).

It localises to the secreted. Its activity is regulated as follows. Prematurely activated/folded staphopain B is inhibited by staphostatin B (SspC), which is probably required to protect staphylococcal cytoplasmic proteins from degradation by SspB. Its function is as follows. Cysteine protease that plays an important role in the inhibition of host innate immune response. Degrades host elastin, fibrogen, fibronectin and kininogen. Blocks phagocytosis of opsonised S.aureus by neutrophils and monocytes by inducing their death in a proteolytic activity-dependent manner. Decreases surface expression of the 'don't eat me' signal CD31 on neutrophils. Cleaves host galectin-3/LGALS3, thereby inhibiting the neutrophil-activating ability of the lectin. This is Staphopain B (sspB) from Staphylococcus aureus (strain MRSA252).